Consider the following 263-residue polypeptide: Ribosomal RNA small subunit methyltransferase A (263 aa).

S-adenosyl-L-methionine-binding residues include Asn13, Thr15, Gly40, Glu61, Asp85, and Asn105.

The protein belongs to the class I-like SAM-binding methyltransferase superfamily. rRNA adenine N(6)-methyltransferase family. RsmA subfamily.

It localises to the cytoplasm. The catalysed reaction is adenosine(1518)/adenosine(1519) in 16S rRNA + 4 S-adenosyl-L-methionine = N(6)-dimethyladenosine(1518)/N(6)-dimethyladenosine(1519) in 16S rRNA + 4 S-adenosyl-L-homocysteine + 4 H(+). Functionally, specifically dimethylates two adjacent adenosines (A1518 and A1519) in the loop of a conserved hairpin near the 3'-end of 16S rRNA in the 30S particle. May play a critical role in biogenesis of 30S subunits. The chain is Ribosomal RNA small subunit methyltransferase A from Mycoplasma pneumoniae (strain ATCC 29342 / M129 / Subtype 1) (Mycoplasmoides pneumoniae).